The following is a 168-amino-acid chain: G/U mismatch-specific DNA glycosylase (168 aa).

It belongs to the uracil-DNA glycosylase (UDG) superfamily. TDG/mug family. In terms of assembly, binds DNA as a monomer.

It is found in the cytoplasm. The enzyme catalyses Specifically hydrolyzes mismatched double-stranded DNA and polynucleotides, releasing free uracil.. Functionally, excises ethenocytosine and uracil, which can arise by alkylation or deamination of cytosine, respectively, from the corresponding mispairs with guanine in ds-DNA. It is capable of hydrolyzing the carbon-nitrogen bond between the sugar-phosphate backbone of the DNA and the mispaired base. The complementary strand guanine functions in substrate recognition. Required for DNA damage lesion repair in stationary-phase cells. The protein is G/U mismatch-specific DNA glycosylase of Shigella dysenteriae serotype 1 (strain Sd197).